Reading from the N-terminus, the 97-residue chain is Aspartyl/glutamyl-tRNA(Asn/Gln) amidotransferase subunit C (97 aa).

Belongs to the GatC family. Heterotrimer of A, B and C subunits.

The catalysed reaction is L-glutamyl-tRNA(Gln) + L-glutamine + ATP + H2O = L-glutaminyl-tRNA(Gln) + L-glutamate + ADP + phosphate + H(+). It catalyses the reaction L-aspartyl-tRNA(Asn) + L-glutamine + ATP + H2O = L-asparaginyl-tRNA(Asn) + L-glutamate + ADP + phosphate + 2 H(+). Functionally, allows the formation of correctly charged Asn-tRNA(Asn) or Gln-tRNA(Gln) through the transamidation of misacylated Asp-tRNA(Asn) or Glu-tRNA(Gln) in organisms which lack either or both of asparaginyl-tRNA or glutaminyl-tRNA synthetases. The reaction takes place in the presence of glutamine and ATP through an activated phospho-Asp-tRNA(Asn) or phospho-Glu-tRNA(Gln). The protein is Aspartyl/glutamyl-tRNA(Asn/Gln) amidotransferase subunit C of Listeria welshimeri serovar 6b (strain ATCC 35897 / DSM 20650 / CCUG 15529 / CIP 8149 / NCTC 11857 / SLCC 5334 / V8).